Consider the following 160-residue polypeptide: MRIGLFAVGRLKTGPEKDLAARYLDRFAKAGPAIGLELARMTEVAESRASNGETRKREEAVLLQKAHPDGGILILLDERGKALDSEAFAALLGTFRDQGKRDLTIAIGGADGLDPSLYDRADATICLGKMTWPHQLVRILIAEQLYRAVTILSGHPYHRV.

S-adenosyl-L-methionine contacts are provided by residues L76, G108, and L127–W132.

This sequence belongs to the RNA methyltransferase RlmH family. In terms of assembly, homodimer.

It localises to the cytoplasm. It catalyses the reaction pseudouridine(1915) in 23S rRNA + S-adenosyl-L-methionine = N(3)-methylpseudouridine(1915) in 23S rRNA + S-adenosyl-L-homocysteine + H(+). Specifically methylates the pseudouridine at position 1915 (m3Psi1915) in 23S rRNA. The chain is Ribosomal RNA large subunit methyltransferase H from Rhizobium rhizogenes (strain K84 / ATCC BAA-868) (Agrobacterium radiobacter).